A 968-amino-acid polypeptide reads, in one-letter code: RNA polymerase-associated protein RapA (968 aa).

Residues 164–334 enclose the Helicase ATP-binding domain; that stretch reads DVGRRHAPRV…FARLRLLDPN (171 aa). 177–184 is a binding site for ATP; the sequence is DEVGLGKT. Residues 280 to 283 carry the DEAH box motif; it reads DEAH. The region spanning 490-685 is the Helicase C-terminal domain; sequence RVEWLMGYLT…ALKAQLEQGR (196 aa).

It belongs to the SNF2/RAD54 helicase family. RapA subfamily. Interacts with the RNAP. Has a higher affinity for the core RNAP than for the holoenzyme. Its ATPase activity is stimulated by binding to RNAP.

Its function is as follows. Transcription regulator that activates transcription by stimulating RNA polymerase (RNAP) recycling in case of stress conditions such as supercoiled DNA or high salt concentrations. Probably acts by releasing the RNAP, when it is trapped or immobilized on tightly supercoiled DNA. Does not activate transcription on linear DNA. Probably not involved in DNA repair. The sequence is that of RNA polymerase-associated protein RapA from Salmonella schwarzengrund (strain CVM19633).